The sequence spans 400 residues: 3-phenylpropionate/cinnamic acid dioxygenase ferredoxin--NAD(+) reductase component (400 aa).

Thr5 to Asp36 lines the FAD pocket. Ser146–Glu174 contacts NAD(+).

It belongs to the bacterial ring-hydroxylating dioxygenase ferredoxin reductase family. In terms of assembly, this dioxygenase system consists of four proteins: the two subunits of the hydroxylase component (HcaE and HcaF), a ferredoxin (HcaC) and a ferredoxin reductase (HcaD). Requires FAD as cofactor.

The enzyme catalyses 2 reduced [2Fe-2S]-[ferredoxin] + NAD(+) + H(+) = 2 oxidized [2Fe-2S]-[ferredoxin] + NADH. It functions in the pathway aromatic compound metabolism; 3-phenylpropanoate degradation. Functionally, part of the multicomponent 3-phenylpropionate dioxygenase, that converts 3-phenylpropionic acid (PP) and cinnamic acid (CI) into 3-phenylpropionate-dihydrodiol (PP-dihydrodiol) and cinnamic acid-dihydrodiol (CI-dihydrodiol), respectively. This chain is 3-phenylpropionate/cinnamic acid dioxygenase ferredoxin--NAD(+) reductase component, found in Escherichia coli (strain K12 / MC4100 / BW2952).